A 320-amino-acid chain; its full sequence is UDP-N-acetylenolpyruvoylglucosamine reductase (320 aa).

The 167-residue stretch at 34–200 (RAGGLAEVFF…TSAVFEGFAE (167 aa)) folds into the FAD-binding PCMH-type domain. R180 is an active-site residue. The active-site Proton donor is the S229. E299 is a catalytic residue.

Belongs to the MurB family. FAD is required as a cofactor.

The protein localises to the cytoplasm. The catalysed reaction is UDP-N-acetyl-alpha-D-muramate + NADP(+) = UDP-N-acetyl-3-O-(1-carboxyvinyl)-alpha-D-glucosamine + NADPH + H(+). It participates in cell wall biogenesis; peptidoglycan biosynthesis. In terms of biological role, cell wall formation. In Mesorhizobium japonicum (strain LMG 29417 / CECT 9101 / MAFF 303099) (Mesorhizobium loti (strain MAFF 303099)), this protein is UDP-N-acetylenolpyruvoylglucosamine reductase.